The chain runs to 366 residues: GDSL esterase/lipase LTL1 (366 aa).

The first 27 residues, 1–27 (MNINCSPLGFLISLFFIVTFLAPQVKS), serve as a signal peptide directing secretion. Serine 36 serves as the catalytic Nucleophile. Asparagine 117 is a glycosylation site (N-linked (GlcNAc...) asparagine). Catalysis depends on residues aspartate 326 and histidine 329. N-linked (GlcNAc...) asparagine glycosylation occurs at asparagine 354.

The protein belongs to the 'GDSL' lipolytic enzyme family. In terms of assembly, binds to VLG at the endomembrane system. In terms of tissue distribution, mostly expressed in flowers, reproductive stems and rosette leaves, and, to a lower extent, in roots.

It is found in the secreted. Involved in the mechanisms of salt tolerance. Mediates resistance to LiCl and NaCl. This chain is GDSL esterase/lipase LTL1, found in Arabidopsis thaliana (Mouse-ear cress).